Consider the following 688-residue polypeptide: Bifunctional protein GAL10 (688 aa).

The tract at residues 1-346 is galactowaldenase; sequence MSEDKYCLVT…TQDNPFGYQI (346 aa). 6-37 lines the NAD(+) pocket; the sequence is YCLVTGGAGYIGSHTVVELCEAGYKCIVVDNL. The interval 347 to 688 is mutarotase; sequence KGVDSKFFGD…HKLSYTFRTL (342 aa). The For mutarotase activity role is filled by His525.

In the N-terminal section; belongs to the NAD(P)-dependent epimerase/dehydratase family. The protein in the C-terminal section; belongs to the aldose epimerase family. It depends on NAD(+) as a cofactor.

The catalysed reaction is UDP-alpha-D-glucose = UDP-alpha-D-galactose. It carries out the reaction alpha-D-glucose = beta-D-glucose. The protein operates within carbohydrate metabolism; galactose metabolism. Its pathway is carbohydrate metabolism; hexose metabolism. Mutarotase converts alpha-aldose to the beta-anomer. It is active on D-glucose, L-arabinose, D-xylose, D-galactose, maltose and lactose. This Kluyveromyces lactis (strain ATCC 8585 / CBS 2359 / DSM 70799 / NBRC 1267 / NRRL Y-1140 / WM37) (Yeast) protein is Bifunctional protein GAL10 (GAL10).